The following is a 78-amino-acid chain: uncharacterized protein (78 aa).

The tract at residues 1-28 is disordered; sequence MGGGNAQKSAMARAKNLEKAKAAGKGSQ.

This is an uncharacterized protein from Arabidopsis thaliana (Mouse-ear cress).